Reading from the N-terminus, the 33-residue chain is GLWSTIKQKGKEAAIAAAKAAGQAALNAASEAL.

Position 33 is a leucine amide (Leu33).

The protein belongs to the frog skin active peptide (FSAP) family. Dermaseptin subfamily. As to expression, expressed by the skin glands.

It is found in the secreted. Has antimicrobial activity. The polypeptide is Dermaseptin-H9 (Pithecopus hypochondrialis (Orange-legged leaf frog)).